A 1916-amino-acid chain; its full sequence is MSKDFSDKKKHTIDRIDQHILRRSQHDNYSNGSSPWMKTNLPPPSPQAHMHIQSDLSPTPKRRKLASSSDCENKQFDLSAINKNLYPEDTGSRLMQSLPELSASNSDNVSPVTKSVAFSDRIESSPIYRIPGSSPKPSPSSKPGKSILRNRLPSVRTVSDLSYNKLQYTQHKLHNGNIFTSPYKETRVNPRALEYWVSGEIHGLVDNESVSEFKEIIEGGLGILRQESEDYVARRFEVYATFNNIIPILTTKNVNEVDQKFNILIVNIESIIEICIPHLQIAQDTLLSSSEKKNPFVIRLYVQIVRFFSAIMSNFKIVKWLTKRPDLVNKLKVIYRWTTGALRNENSNKIIITAQVSFLRDEKFGTFFLSNEEIKPIISTFTEIMEINSHNLIYEKLLLIRGFLSKYPKLMIETVTSWLPGEVLPRIIIGDEIYSMKILITSIVVLLELLKKCLDFVDEHERIYQCIMLSPVCETIPEKFLSKLPLNSYDSANLDKVTIGHLLTQQIKNYIVVKNDNKIAMDLWLSMTGLLYDSGKRVYDLTSESNKVWFDLNNLCFINNHPKTRLMSIKVWRIITYCICTKISQKNQEGNKSLLSLLRTPFQMTLPYVNDPSAREGIIYHLLGVVYTAFTSNKNLSTDMFELFWDHLITPIYEDYVFKYDSIHLQNVLFTVLHLLIGGKNADVALERKYKKHIHPMSVIASEGVKLKDISSLPPQIIKREYDKIMKVVFQAVEVAISNVNLAHDLILTSLKHLPEDRKDQTHLESFSSLILKVTQNNKDTPIFRDFFGAVTSSFVYTFLDLFLRKNDSSLVNFNIQISKVGISQGNMTLDLLKDVIRKARNETSEFLIIEKFLELDDKKTEVYAQNWVGSTLLPPNISFREFQSLANIVNKVPNENSIENFLDLCLKLSFPVNLFTLLHVSMWSNNNFIYFIQSYVSKNENKLNVDLITLLKTSLPGNPELFSGLLPFLRRNKFMDILEYCIHSNPNLLNSIPDLNSDLLLKLLPRSRASYFAANIKLFKCSEQLTLVRWLLKGQQLEQLNQNFSEIENVLQNASDSELEKSEIIRELLHLAMANPIEPLFSGLLNFCIKNNMADHLDEFCGNMTSEVLFKISPELLLKLLTYKEKPNGKLLAAVIEKIENGDDDYILELLEKIIIQKEIQILEKLKEPLLVFFLNPVSSNMQKHKKSTNMLRELVLLYLTKPLSRSAAKKFFSMLISILPPNPNYQTIDMVNLLIDLIKSHNRKFKDKRTYNATLKTIGKWIQESGVVHQGDSSKEIEAIPDTKSMYIPCEGSENKLSNLQRKVDSQDIQVPATQGMKEPPSSIQISSQISAKDSDSISLKNTAIMNSSQQESHANRSRSIDDETLEEVDNESIREIDQQMKSTQLDKNVANHSNICSTKSDEVDVTELHESIDTQSSEVNAYQPIEVLTSELKAVTNRSIKTNPDHNVVNSDNPLKRPSKETPTSENKRSKGHETMVDVLVSEEQAVSPSSDVICTNIKSIANEESSLALRNSIKVETNCNENSLNVTLDLDQQTITKEDGKGQVEHVQRQENQESMNKINSKSFTQDNIAQYKSVKKARPNNEGENNDYACNVEQASPVRNEVPGDGIQIPSGTILLNSSKQTEKSKVDDLRSDEDEHGTVAQEKHQVGAINSRNKNNDRMDSTPIQGTEEESREVVMTEEGINVRLEDSGTCELNKNLKGPLKGDKDANINDDFVPVEENVRDEGFLKSMEHAVSKETGLEEQPEVADISVLPEIRIPIFNSLKMQGSKSQIKEKLKKRLQRNELMPPDSPPRMTENTNINAQNGLDTVPKTIGGKEKHHEIQLGQAHTEADGEPLLGGDGNEDATSREATPSLKVHFFSKKSRRLVARLRGFTPGDLNGISVEERRNLRIELLDFMMRLEYYSNRDNDMN.

Residues 1 to 26 (MSKDFSDKKKHTIDRIDQHILRRSQH) show a composition bias toward basic and acidic residues. The interval 1 to 71 (MSKDFSDKKK…RRKLASSSDC (71 aa)) is disordered. Residues 27–37 (DNYSNGSSPWM) show a composition bias toward polar residues. Position 97 is a phosphoserine (serine 97). Disordered regions lie at residues 126–149 (PIYR…SILR), 1314–1372 (PATQ…EEVD), 1441–1476 (RSIK…SKGH), 1606–1678 (EVPG…EESR), 1789–1811 (ELMP…QNGL), and 1829–1854 (LGQA…TSRE). The span at 1324–1334 (SSIQISSQISA) shows a compositional bias: low complexity. The segment covering 1342–1355 (LKNTAIMNSSQQES) has biased composition (polar residues). Residues 1615–1625 (PSGTILLNSSK) are compositionally biased toward polar residues. The span at 1626–1635 (QTEKSKVDDL) shows a compositional bias: basic and acidic residues. Phosphoserine is present on residues serine 1637 and serine 1795. Residues 1800 to 1811 (TENTNINAQNGL) are compositionally biased toward polar residues. Position 1852 is a phosphoserine (serine 1852).

This sequence belongs to the RIF1 family. Interacts with RAP1 (via C-terminus). Interacts with RIF2.

It localises to the nucleus. The protein localises to the chromosome. Its subcellular location is the telomere. Its function is as follows. Negatively regulates telomere length by preventing telomere elongation or promoting degradation of the telomere ends. Recruited to telomeres by interaction with the C-terminus of RAP1, which binds directly to telomeric repeat DNA. This may create a negative feedback loop in which the addition of new telomere repeats creates binding sites for inhibitors of telomere length extension. May also influence the balance of transcriptional silencing at telomeres and the silent mating type locus HMR, which is mediated by SIR (Silent Information Regulator) proteins including SIR3 and SIR4. RIF1 competes with SIR proteins for binding to the C-terminus of RAP1. In the absence of RIF1, a limiting cellular pool of SIR proteins may preferentially associate with RAP1 at sub-telomeric loci, causing enhanced telomeric silencing and attenuated silencing of the HMR locus. This chain is Telomere length regulator protein RIF1 (RIF1), found in Saccharomyces cerevisiae (strain ATCC 204508 / S288c) (Baker's yeast).